The following is a 71-amino-acid chain: MAVEKTNSSSSLAEVIDRILDKGIVIDAWVRVSLVGIELLAIEARIVIASVETYLKYAEAVGLTQSAAVPA.

The interval 12 to 22 (LAEVIDRILDK) is alpha helix 1. The segment at 23 to 32 (GIVIDAWVRV) is beta-strand 1. A beta turn region spans residues 33–36 (SLVG). A beta-strand 2 region spans residues 37-46 (IELLAIEARI). The tract at residues 47–70 (VIASVETYLKYAEAVGLTQSAAVP) is alpha helix 2.

It belongs to the gas vesicle GvpA family. As to quaternary structure, the gas vesicle shell is 2 nm thick and consists of a single layer of this protein. It forms helical ribs nearly perpendicular to the long axis of the vesicle.

The protein resides in the gas vesicle shell. In terms of biological role, gas vesicles (GV) are hollow, gas filled proteinaceous nanostructures found in some microorganisms. During planktonic growth they allow positioning of the organism at a favorable depth for light or nutrient acquisition. GVs are highly permeable to gas. GvpA forms the protein shell. The ratio of GvpA:GvpC is estimated to be 33:1 and more recently 25:1. This chain is Gas vesicle protein A, found in Dolichospermum flosaquae (Anabaena flos-aquae).